Here is a 71-residue protein sequence, read N- to C-terminus: Conotoxin De13.1 (71 aa).

Positions 1-19 (MSGMGVLLLVLLLVMPLAA) are cleaved as a signal peptide. Positions 20–35 (FHQDGEGEATRRSGGL) are excised as a propeptide. 4-hydroxyproline is present on residues Pro-40 and Pro-44. Residue Trp-51 is modified to 6'-bromotryptophan. Glu-52 bears the 4-carboxyglutamate mark. Lys-55 bears the 5-hydroxylysine mark. Pro-58 is subject to 4-hydroxyproline. At His-69 the chain carries Histidine amide.

The protein belongs to the conotoxin G superfamily. Contains 4 disulfide bonds. Expressed by the venom duct.

Its subcellular location is the secreted. The polypeptide is Conotoxin De13.1 (Conasprella delessertii (Sozon's cone)).